Here is a 273-residue protein sequence, read N- to C-terminus: SPRY domain-containing SOCS box protein 1 (273 aa).

Residue tyrosine 31 is modified to Phosphotyrosine. The B30.2/SPRY domain maps to 33–231 (KPTRLDLLLD…IRMRYLNGLD (199 aa)). Residues 232–273 (PEPLPLMDLCRRSVRLALGKERLGAIPALPLPASLKAYLLYQ) enclose the SOCS box domain.

Belongs to the SPSB family. As to quaternary structure, component of the probable ECS(SPSB1) E3 ubiquitin-protein ligase complex which contains CUL5, RNF7/RBX2, Elongin BC complex and SPSB1. Interacts with CUL5, RNF7, ELOB and ELOC. Directly interacts with MET tyrosine kinase domain in the presence and in the absence of HGF, however HGF treatment has a positive effect on this interaction. When phosphorylated, interacts with RASA1 without affecting its stability. Interacts (via B30.2/SPRY domain) with PAWR; this interaction is direct and occurs in association with the Elongin BC complex. Interacts with EPHB2. Interacts with NOS2.

Its subcellular location is the cytoplasm. It is found in the cytosol. It functions in the pathway protein modification; protein ubiquitination. Functionally, substrate recognition component of a SCF-like ECS (Elongin BC-CUL2/5-SOCS-box protein) E3 ubiquitin-protein ligase complex which mediates the ubiquitination and subsequent proteasomal degradation of target proteins. Negatively regulates nitric oxide (NO) production and limits cellular toxicity in activated macrophages by mediating the ubiquitination and proteasomal degradation of NOS2. Acts as a bridge which links the NOS2 with the ECS E3 ubiquitin ligase complex components ELOC and CUL5. The sequence is that of SPRY domain-containing SOCS box protein 1 (Spsb1) from Mus musculus (Mouse).